The chain runs to 307 residues: Serine/threonine-protein phosphatase 4 catalytic subunit B (307 aa).

Mn(2+) contacts are provided by D54, H56, D82, and N114. The active-site Proton donor is H115. Mn(2+)-binding residues include H164 and H238. L307 is subject to Leucine methyl ester.

The protein belongs to the PPP phosphatase family. PP-4 (PP-X) subfamily. As to quaternary structure, serine/threonine-protein phosphatase 4 (PP4) occurs in different assemblies of the catalytic and one or more regulatory subunits. Requires Mn(2+) as cofactor.

Its subcellular location is the cytoplasm. It localises to the cytoskeleton. The protein resides in the microtubule organizing center. The protein localises to the centrosome. The catalysed reaction is O-phospho-L-seryl-[protein] + H2O = L-seryl-[protein] + phosphate. It carries out the reaction O-phospho-L-threonyl-[protein] + H2O = L-threonyl-[protein] + phosphate. Protein phosphatase that regulates many processes such as microtubule organization at centrosomes. This chain is Serine/threonine-protein phosphatase 4 catalytic subunit B (ppp4cb), found in Danio rerio (Zebrafish).